Here is a 382-residue protein sequence, read N- to C-terminus: Mannitol-1-phosphate 5-dehydrogenase (382 aa).

Residue 3 to 14 (AVHFGAGNIGRG) participates in NAD(+) binding.

It belongs to the mannitol dehydrogenase family.

It catalyses the reaction D-mannitol 1-phosphate + NAD(+) = beta-D-fructose 6-phosphate + NADH + H(+). This is Mannitol-1-phosphate 5-dehydrogenase from Exiguobacterium sp. (strain ATCC BAA-1283 / AT1b).